Here is a 250-residue protein sequence, read N- to C-terminus: 5'-nucleotidase SurE (250 aa).

A divalent metal cation is bound by residues aspartate 8, aspartate 9, serine 40, and asparagine 95.

This sequence belongs to the SurE nucleotidase family. Requires a divalent metal cation as cofactor.

It localises to the cytoplasm. The enzyme catalyses a ribonucleoside 5'-phosphate + H2O = a ribonucleoside + phosphate. Nucleotidase that shows phosphatase activity on nucleoside 5'-monophosphates. This is 5'-nucleotidase SurE from Nitratidesulfovibrio vulgaris (strain ATCC 29579 / DSM 644 / CCUG 34227 / NCIMB 8303 / VKM B-1760 / Hildenborough) (Desulfovibrio vulgaris).